We begin with the raw amino-acid sequence, 833 residues long: Glycerol-3-phosphate acyltransferase (833 aa).

An HXXXXD motif motif is present at residues 309–314; the sequence is CHRSHI.

Belongs to the GPAT/DAPAT family.

The protein resides in the cell inner membrane. The catalysed reaction is sn-glycerol 3-phosphate + an acyl-CoA = a 1-acyl-sn-glycero-3-phosphate + CoA. The protein operates within phospholipid metabolism; CDP-diacylglycerol biosynthesis; CDP-diacylglycerol from sn-glycerol 3-phosphate: step 1/3. This chain is Glycerol-3-phosphate acyltransferase, found in Pseudomonas savastanoi pv. phaseolicola (strain 1448A / Race 6) (Pseudomonas syringae pv. phaseolicola (strain 1448A / Race 6)).